The sequence spans 243 residues: UMP-CMP kinase 2 (243 aa).

69 to 74 is a binding site for ATP; it reads GSGKGT. The segment at 89–118 is NMP; it reads SAGDLLRSEISTGREKGELILNIIKEGKIV. Residues R95, 116 to 118, and 143 to 146 contribute to the a ribonucleoside 5'-phosphate site; these read KIV and GFPR. N150 serves as a coordination point for CMP. The interval 181-189 is LID; that stretch reads GRNQGRVDD. R182 contributes to the ATP binding site. The a ribonucleoside 5'-phosphate site is built by R186 and R197.

Belongs to the adenylate kinase family. UMP-CMP kinase subfamily. In terms of assembly, monomer. Mg(2+) serves as cofactor.

It localises to the cytoplasm. The protein resides in the nucleus. The catalysed reaction is UMP + ATP = UDP + ADP. The enzyme catalyses CMP + ATP = CDP + ADP. It carries out the reaction dCMP + ATP = dCDP + ADP. In terms of biological role, catalyzes the phosphorylation of pyrimidine nucleoside monophosphates at the expense of ATP. Plays an important role in de novo pyrimidine nucleotide biosynthesis. Has preference for UMP and CMP as phosphate acceptors. In Oryza sativa subsp. japonica (Rice), this protein is UMP-CMP kinase 2.